A 193-amino-acid chain; its full sequence is Resuscitation-promoting factor Rpf1 (193 aa).

The N-terminal stretch at 1-35 (MGRHSTKTSSAFTKLAASTIAFGAAATIMAPSASA) is a signal peptide.

The protein belongs to the transglycosylase family. Rpf subfamily.

The protein resides in the secreted. Functionally, factor that stimulates resuscitation of dormant cells. Has peptidoglycan (PG) hydrolytic activity. Active in the pM concentration range. Has little to no effect on actively-growing cells. PG fragments could either directly activate the resuscitation pathway of dormant bacteria or serve as a substrate for endogenous Rpf, resulting in low molecular weight products with resuscitation activity. This is Resuscitation-promoting factor Rpf1 (rpf1) from Corynebacterium glutamicum (strain ATCC 13032 / DSM 20300 / JCM 1318 / BCRC 11384 / CCUG 27702 / LMG 3730 / NBRC 12168 / NCIMB 10025 / NRRL B-2784 / 534).